Consider the following 754-residue polypeptide: Phosphatase and actin regulator 4B (754 aa).

Residues 1 to 12 (MENRDDEVEHQH) show a composition bias toward basic and acidic residues. Disordered stretches follow at residues 1–38 (MENR…FSTL), 83–105 (KELP…KNGH), 120–625 (VHSP…SKEQ), and 637–666 (LTRR…DRQA). Residues 61–86 (EVLERKMSMRRPRQELIEQGVLKELP) form an RPEL 1 repeat. Composition is skewed to basic and acidic residues over residues 138–153 (PEDR…DHRG), 184–221 (HGED…EPDW), and 229–241 (SSVE…RESD). Composition is skewed to low complexity over residues 296 to 307 (SFCSSNSSSSSS) and 316 to 333 (SSAG…LTTS). 4 stretches are compositionally biased toward pro residues: residues 348 to 357 (KQPPMPPPKP), 381 to 390 (KPSPPMPPKR), 427 to 445 (LPPP…PSPP), and 460 to 478 (YPLP…PPED). Acidic residues-rich tracts occupy residues 483 to 503 (DEDD…DEEP), 541 to 557 (SEEE…ESDS), and 566 to 576 (DESDEDEEDDS). A compositionally biased stretch (basic and acidic residues) spans 605–615 (QAPERQAKSEH). RPEL repeat units follow at residues 635–660 (TALT…QPKN) and 673–698 (RRLT…RFHE). A Phosphoserine modification is found at serine 642.

Belongs to the phosphatase and actin regulator family. As to quaternary structure, binds ppp1ca and actin.

The protein localises to the cytoplasm. It is found in the cell projection. The protein resides in the lamellipodium. In terms of biological role, regulator of protein phosphatase 1 (PP1) required for neural tube and optic fissure closure, and enteric neural crest cell (ENCCs) migration during development. Acts as an activator of PP1. During neural tube closure, localizes to the ventral neural tube and activates PP1, leading to down-regulate cell proliferation within cranial neural tissue and the neural retina. Also acts as a regulator of migration of enteric neural crest cells (ENCCs) by activating PP1, leading to repression of the integrin signaling through the rho/rock pathway. The sequence is that of Phosphatase and actin regulator 4B (phactr4b) from Danio rerio (Zebrafish).